Here is a 345-residue protein sequence, read N- to C-terminus: Probable glucan endo-1,3-beta-glucosidase BG4 (345 aa).

Residues Met1–Ser22 form the signal peptide. N-linked (GlcNAc...) asparagine glycosylation is found at Asn23 and Asn119. The Proton donor role is filled by Glu128. The active-site Nucleophile is Glu267. 2 N-linked (GlcNAc...) asparagine glycosylation sites follow: Asn277 and Asn306.

The protein belongs to the glycosyl hydrolase 17 family.

Its subcellular location is the secreted. It catalyses the reaction Hydrolysis of (1-&gt;3)-beta-D-glucosidic linkages in (1-&gt;3)-beta-D-glucans.. May play a role in plant defense against pathogens. The chain is Probable glucan endo-1,3-beta-glucosidase BG4 from Arabidopsis thaliana (Mouse-ear cress).